The chain runs to 398 residues: Phosphoglycerate kinase (398 aa).

Residues 22-24 (DFN), R38, 61-64 (HLGR), R120, and R153 contribute to the substrate site. ATP-binding positions include K204, E326, and 352 to 355 (GGDT).

This sequence belongs to the phosphoglycerate kinase family. Monomer.

It localises to the cytoplasm. It carries out the reaction (2R)-3-phosphoglycerate + ATP = (2R)-3-phospho-glyceroyl phosphate + ADP. It participates in carbohydrate degradation; glycolysis; pyruvate from D-glyceraldehyde 3-phosphate: step 2/5. The sequence is that of Phosphoglycerate kinase from Geobacter metallireducens (strain ATCC 53774 / DSM 7210 / GS-15).